Here is a 103-residue protein sequence, read N- to C-terminus: Integration host factor subunit alpha (103 aa).

Belongs to the bacterial histone-like protein family. Heterodimer of an alpha and a beta chain.

Functionally, this protein is one of the two subunits of integration host factor, a specific DNA-binding protein that functions in genetic recombination as well as in transcriptional and translational control. The polypeptide is Integration host factor subunit alpha (Bartonella bacilliformis (strain ATCC 35685 / KC583 / Herrer 020/F12,63)).